A 62-amino-acid chain; its full sequence is Alkaline proteinase (62 aa).

The Peptidase S8 domain maps to Gly-1–Ser-62. The active-site Charge relay system is Asp-21.

The protein resides in the secreted. Inhibited by phenylmethanesulfonyl fluoride (PMSF) and chymostatin (CST), but not by Bowman-Birk type trypsin-chymotrypsin inhibitor (BBI). Its function is as follows. Serine protease. May be involved in the invasion of grains and hydrolysis of grain proteins. The sequence is that of Alkaline proteinase from Fusarium culmorum.